The sequence spans 399 residues: MINTNDMFYAKSSDAEIAEAGEYGGAVTTLLKFLLKEGIVDAVLAVDSSADLYDVVPILIEDPEDVVKAAGSLHFGTLNLAKVVTRYLDGAQDMKIAVTVKPCDAMTMVELMKREKVNADNVIMVGLNCGGTMPPVKGRQMMEEFYEVDPDSVVKEEIAKGKLIVETEDGTEKEIPIDELEDEGFGRRTNCRRCEVNIPRMADLACGNWGVIGPLAGKATFIEVCSPKGAEVLEKAKEAGVIDLEDPIPKGIEIREKIDGAMVKLADKWQGNDWEDKAGREIFSVLTEYMDDFSRCLKCYGCREACPICYCEDCCLEANNGPDWLSKGEIPPSPMFHLERMLHMVESCTNCGQCEEVCPGEIPLAKIWHEVNAKMKDTFGYVKGTGDEKPPIAYFPVGK.

4Fe-4S ferredoxin-type domains are found at residues 287–307 (TEYM…EACP) and 339–367 (ERML…LAKI). 8 residues coordinate [4Fe-4S] cluster: Cys296, Cys299, Cys302, Cys306, Cys348, Cys351, Cys354, and Cys358.

Belongs to the FrhB family. Dimer of an alpha (FdhA) and a beta (FdhB) subunit. [4Fe-4S] cluster serves as cofactor. The cofactor is FAD. It depends on Zn(2+) as a cofactor.

The enzyme catalyses oxidized coenzyme F420-(gamma-L-Glu)(n) + formate + 2 H(+) = reduced coenzyme F420-(gamma-L-Glu)(n) + CO2. Its activity is regulated as follows. Is extremely sensitive to oxygen. Contains a FAD that is required for coenzyme F420-dependent activity but not for methyl viologen-dependent activity. Preincubation of the FAD-depleted enzyme with FAD restores coenzyme F420-dependent activity. Neither FMN nor FADH2 can replace FAD. Strongly inhibited by cyanide, azide, alpha,alpha-dipyridyl and 1,10-phenanthroline. Functionally, catalyzes the oxidation of formate to carbon dioxide, with coenzyme F420 as the electron acceptor. In vitro can also use methyl viologen, 7,8-didemethyl-8-hydroxy-5-deazariboflavin (or FO, a hydrolytic derivative of coenzyme F420), FMN and FAD as electron acceptors, but not NAD(+) or NADP(+). The protein is F420-dependent formate dehydrogenase subunit beta of Methanobacterium formicicum.